The sequence spans 342 residues: UDP-N-acetylenolpyruvoylglucosamine reductase (342 aa).

Residues 17 to 192 (RFEAAARYAA…AEVTFALPVD (176 aa)) enclose the FAD-binding PCMH-type domain. Residue Arg168 is part of the active site. Ser242 functions as the Proton donor in the catalytic mechanism. The active site involves Glu338.

It belongs to the MurB family. The cofactor is FAD.

The protein resides in the cytoplasm. It catalyses the reaction UDP-N-acetyl-alpha-D-muramate + NADP(+) = UDP-N-acetyl-3-O-(1-carboxyvinyl)-alpha-D-glucosamine + NADPH + H(+). It participates in cell wall biogenesis; peptidoglycan biosynthesis. In terms of biological role, cell wall formation. The sequence is that of UDP-N-acetylenolpyruvoylglucosamine reductase from Ralstonia nicotianae (strain ATCC BAA-1114 / GMI1000) (Ralstonia solanacearum).